We begin with the raw amino-acid sequence, 245 residues long: uncharacterized protein (245 aa).

One can recognise an HTH gntR-type domain in the interval 29–96; sequence RSLIEATFQR…AQRGFHVTPM (68 aa). The segment at residues 56-75 is a DNA-binding region (H-T-H motif); sequence IEDLKSRYEVSGGTVREALS.

This is an uncharacterized protein from Paraburkholderia xenovorans (strain LB400).